The primary structure comprises 424 residues: Na(+)/H(+) antiporter NhaA (424 aa).

The next 11 helical transmembrane spans lie at 23–43 (ILLIFAAILAMIVANSPLATL), 65–85 (VHLWINDGLMAVFFLLVGLEI), 102–122 (LPFIAAAAGMAVPAALYMFFV), 131–151 (GWAIPAATDIAFAMGVLALLG), 160–180 (LFLVTVAIVDDMGAVAIIALF), 183–203 (AKINLLALGAAAAILGIMFAC), 211–231 (LLVYMALFLLLWYAMLLSGVH), 265–285 (ALHPTVAFAIVPLFGFANAGV), 303–323 (IAAGLFLGKQIGIFGSVWLAV), 341–361 (AVSMLCGIGFTMSLFIGSLAF), and 373–393 (IGILMGSLASALVGFAVLRLA).

The protein belongs to the NhaA Na(+)/H(+) (TC 2.A.33) antiporter family.

Its subcellular location is the cell inner membrane. The catalysed reaction is Na(+)(in) + 2 H(+)(out) = Na(+)(out) + 2 H(+)(in). Its function is as follows. Na(+)/H(+) antiporter that extrudes sodium in exchange for external protons. In Sphingopyxis alaskensis (strain DSM 13593 / LMG 18877 / RB2256) (Sphingomonas alaskensis), this protein is Na(+)/H(+) antiporter NhaA.